The chain runs to 116 residues: Ribonuclease T (116 aa).

The Exonuclease domain maps to 18-99 (KRAILVGHNS…YDTEKTAELF (82 aa)). Residue histidine 86 is the Proton donor/acceptor of the active site.

The protein belongs to the RNase T family. Homodimer.

In terms of biological role, trims short 3' overhangs of a variety of RNA species, leaving a one or two nucleotide 3' overhang. Responsible for the end-turnover of tRNA: specifically removes the terminal AMP residue from uncharged tRNA (tRNA-C-C-A). Also appears to be involved in tRNA biosynthesis. The protein is Ribonuclease T of Azotobacter vinelandii.